Here is a 225-residue protein sequence, read N- to C-terminus: Uridylate kinase (225 aa).

G9–S10 provides a ligand contact to ATP. G44 serves as a coordination point for UMP. ATP contacts are provided by G45 and R49. Residues D66 and T114 to T120 each bind UMP. 4 residues coordinate ATP: T140, N141, Y146, and D149.

Belongs to the UMP kinase family. In terms of assembly, homohexamer.

It is found in the cytoplasm. The enzyme catalyses UMP + ATP = UDP + ADP. It participates in pyrimidine metabolism; CTP biosynthesis via de novo pathway; UDP from UMP (UMPK route): step 1/1. Inhibited by UTP. In terms of biological role, catalyzes the reversible phosphorylation of UMP to UDP. This Thermococcus onnurineus (strain NA1) protein is Uridylate kinase.